Here is a 277-residue protein sequence, read N- to C-terminus: DNA polymerase epsilon subunit C (277 aa).

2 stretches are compositionally biased toward polar residues: residues 1 to 16 (MSSP…SQVA) and 24 to 39 (ETPS…TNTP). The disordered stretch occupies residues 1 to 91 (MSSPMPQSSL…EEEEEEESLS (91 aa)). The segment covering 69–89 (ENEDDDEQEEEEEEEEEEEES) has biased composition (acidic residues).

As to quaternary structure, heterotetramer. Consists of four subunits: POL2, DPB2, DPB3 and DPB4.

The protein localises to the nucleus. As accessory component of the DNA polymerase epsilon (DNA polymerase II) participates in chromosomal DNA replication. The chain is DNA polymerase epsilon subunit C (DPB3) from Debaryomyces hansenii (strain ATCC 36239 / CBS 767 / BCRC 21394 / JCM 1990 / NBRC 0083 / IGC 2968) (Yeast).